We begin with the raw amino-acid sequence, 531 residues long: GTPase Obg (531 aa).

One can recognise an Obg domain in the interval 2–159 (ASFVDRVIVH…QEVELELKSI (158 aa)). The OBG-type G domain occupies 160–341 (ADIALVGFPS…LSFAMAALVS (182 aa)). Residues 166 to 173 (GFPSAGKS), 191 to 195 (FTTLV), 212 to 215 (DVPG), 293 to 296 (NKVD), and 322 to 324 (STA) contribute to the GTP site. Mg(2+) contacts are provided by Ser173 and Thr193. The segment at 346–365 (QEEQREQQRQTVPVLQPEPV) is disordered. Positions 368-453 (RRGRDRREFV…ENGVVFDWEP (86 aa)) constitute an OCT domain. Residues 459–531 (AELLGGPRGS…TSETKETNEK (73 aa)) form a disordered region. Basic and acidic residues-rich tracts occupy residues 468–507 (SDLR…ERRA) and 514–531 (VDAR…TNEK).

This sequence belongs to the TRAFAC class OBG-HflX-like GTPase superfamily. OBG GTPase family. As to quaternary structure, monomer. Mg(2+) is required as a cofactor.

The protein localises to the cytoplasm. An essential GTPase which binds GTP, GDP and possibly (p)ppGpp with moderate affinity, with high nucleotide exchange rates and a fairly low GTP hydrolysis rate. Plays a role in control of the cell cycle, stress response, ribosome biogenesis and in those bacteria that undergo differentiation, in morphogenesis control. This is GTPase Obg from Kocuria rhizophila (strain ATCC 9341 / DSM 348 / NBRC 103217 / DC2201).